A 525-amino-acid chain; its full sequence is M-phase inducer phosphatase 1 (525 aa).

The short motif at 73–83 is the Phosphodegron element; the sequence is MGSSESTDSGF. At serine 75 the chain carries Phosphoserine; by CHEK1. 3 positions are modified to phosphoserine; by NEK11: serine 78, serine 81, and serine 87. Position 106 is a phosphoserine (serine 106). Serine 123 bears the Phosphoserine; by CHEK1 and CHEK2 mark. Positions 140–142 match the KEN box motif; sequence KEN. At serine 177 the chain carries Phosphoserine; by CHEK1. Disordered stretches follow at residues 179–204 and 262–308; these read PARMLSSNERDGNEPGNSIPFMPQSP and SASC…PEKP. A phosphoserine; by CHEK1 and CHEK2 mark is found at serine 279 and serine 293. The span at 294 to 306 shows a compositional bias: low complexity; that stretch reads VAGASPEEAASPE. Serine 322 carries the phosphoserine modification. Positions 377–483 constitute a Rhodanese domain; the sequence is LIKEFVIIDC…FFLKCQSHCE (107 aa). Cysteine 432 is a catalytic residue. Position 508 is a phosphothreonine; by CHEK1 (threonine 508). A phosphoserine; by PLK3 mark is found at serine 514 and serine 520.

It belongs to the MPI phosphatase family. Interacts with CCNB1/cyclin B1. Interacts with YWHAE/14-3-3 epsilon when phosphorylated. Interacts with CUL1 specifically when CUL1 is neddylated and active. Interacts with BTRC/BTRCP1 and FBXW11/BTRCP2. Interactions with CUL1, BTRC and FBXW11 are enhanced upon DNA damage. Interacts with HSP90AB1; prevents heat shock-mediated CDC25A degradation and contributes to cell cycle progression. Post-translationally, phosphorylated by CHEK1 on Ser-75, Ser-123, Ser-177, Ser-279, Ser-293 and Thr-508 during checkpoint mediated cell cycle arrest. Also phosphorylated by CHEK2 on Ser-123, Ser-279, and Ser-293 during checkpoint mediated cell cycle arrest. Phosphorylation on Ser-177 and Thr-508 creates binding sites for YWHAE/14-3-3 epsilon which inhibits CDC25A. Phosphorylation on Ser-75, Ser-123, Ser-177, Ser-279 and Ser-293 may also promote ubiquitin-dependent proteolysis of CDC25A by the SCF complex. Phosphorylation of CDC25A at Ser-75 by CHEK1 primes it for subsequent phosphorylation at Ser-78, Ser-81 and Ser-87 by NEK11. Phosphorylation by NEK11 is required for BTRC-mediated polyubiquitination and degradation. Phosphorylation by PIM1 leads to an increase in phosphatase activity. Phosphorylated by PLK3 following DNA damage, leading to promote its ubiquitination and degradation. In terms of processing, ubiquitinated by the anaphase promoting complex/cyclosome (APC/C) ubiquitin ligase complex that contains FZR1/CDH1 during G1 phase leading to its degradation by the proteasome. Ubiquitinated by a SCF complex containing BTRC and FBXW11 during S phase leading to its degradation by the proteasome. Deubiquitination by USP17L2/DUB3 leads to its stabilization.

The catalysed reaction is O-phospho-L-tyrosyl-[protein] + H2O = L-tyrosyl-[protein] + phosphate. Stimulated by B-type cyclins. Stimulated by PIM1-mediated phosphorylation. In terms of biological role, tyrosine protein phosphatase which functions as a dosage-dependent inducer of mitotic progression. Directly dephosphorylates CDK1 and stimulates its kinase activity. Also dephosphorylates CDK2 in complex with cyclin-E, in vitro. This chain is M-phase inducer phosphatase 1 (CDC25A), found in Bos taurus (Bovine).